An 86-amino-acid chain; its full sequence is Large ribosomal subunit protein bL31B (86 aa).

This sequence belongs to the bacterial ribosomal protein bL31 family. Type B subfamily. Part of the 50S ribosomal subunit.

The protein is Large ribosomal subunit protein bL31B of Yersinia enterocolitica serotype O:8 / biotype 1B (strain NCTC 13174 / 8081).